The sequence spans 342 residues: Hydrogenase expression/formation protein HupV (342 aa).

It belongs to the HupK family.

The chain is Hydrogenase expression/formation protein HupV (hupV) from Azotobacter chroococcum mcd 1.